The sequence spans 286 residues: ATP synthase gamma chain (286 aa).

This sequence belongs to the ATPase gamma chain family. As to quaternary structure, F-type ATPases have 2 components, CF(1) - the catalytic core - and CF(0) - the membrane proton channel. CF(1) has five subunits: alpha(3), beta(3), gamma(1), delta(1), epsilon(1). CF(0) has three main subunits: a, b and c.

Its subcellular location is the cell inner membrane. Functionally, produces ATP from ADP in the presence of a proton gradient across the membrane. The gamma chain is believed to be important in regulating ATPase activity and the flow of protons through the CF(0) complex. The protein is ATP synthase gamma chain of Pseudomonas fluorescens (strain SBW25).